The primary structure comprises 341 residues: Cell division protein FtsQ (341 aa).

At 1–126 (MTETDEGAPV…VARGVVRGLK (126 aa)) the chain is on the cytoplasmic side. The helical transmembrane segment at 127–147 (TLFATVMFSIAGFGLGLALYV) threads the bilayer. Topologically, residues 148–341 (TPAMSVRNIV…VSSPDLPTVK (194 aa)) are extracellular. In terms of domain architecture, POTRA spans 151–219 (MSVRNIVVTG…SALRITIVER (69 aa)).

Belongs to the FtsQ/DivIB family. FtsQ subfamily.

It is found in the cell membrane. Its function is as follows. Essential cell division protein. The chain is Cell division protein FtsQ from Mycobacterium leprae (strain Br4923).